The primary structure comprises 366 residues: Trans-enoyl reductase caaB (366 aa).

One can recognise an Enoyl reductase (ER) domain in the interval 19-363 (GAGQLSIYHD…RQTVSGHKLV (345 aa)). Tyr-219 is an NADP(+) binding site.

Belongs to the zinc-containing alcohol dehydrogenase family. Monomer.

It participates in secondary metabolite biosynthesis. Trans-enoyl reductase; part of the gene cluster that produces the acyltetronic acid derivatives carlosic acid, agglomerin F and carlosic acid methyl ether. The PKS domains of caaA condenses two malonyl-CoAs into an acetyl starter unit, and form 1,3-diketohexanyl-ACP with the help of the trans-enoyl reductase caaB. Next, the C domain of caaA forms the ester bond between the acyl chain and L-malic acid (derived from the TCA cycle) and accepted by the A domain instead of an amino acid. Finally, the terminal reductase/Dieckmann cyclization (R/DKC) domain cyclizes the intermediate and releases the product as carlosic acid. Decarboxylation of carlosic acid followed by formation of the exocyclic double bond is likely to be catalyzed by the cytochrome P450 monooxygenase caaC. Thus, decarboxylation and oxidation would be coupled (performed by one enzyme) through concomitant abstraction of the hydrogen at C-4. Finally, sequential oxidations of the terminal C-10 methyl group to form carboxylic acid would be catalyzed by the 2-oxoglutarate-dependent dioxygenase caaD, which is required for the biosynthesis of agglomerin F. The chain is Trans-enoyl reductase caaB from Aspergillus niger (strain ATCC MYA-4892 / CBS 513.88 / FGSC A1513).